The following is a 280-amino-acid chain: uncharacterized protein (280 aa).

The next 6 helical transmembrane spans lie at 46-66 (LIFLLALPFLTLPFDSYFVCT), 81-101 (IACSYFVFPLISYQIWCFLIP), 114-134 (FFYLSGSCFFLFLFLTFSWVV), 137-157 (VWHFLYFVGATSTNSLMIKLQ), 170-190 (ILFISSVCSQVPVIVICLLEL), and 225-245 (IVACFLISLIIELAIFVALIV). The disordered stretch occupies residues 258-280 (ESGSIEKKNKSSPPPRTWQSNYQ).

The protein belongs to the TatC family.

Its subcellular location is the mitochondrion membrane. This is an uncharacterized protein from Arabidopsis thaliana (Mouse-ear cress).